The chain runs to 155 residues: Ribonuclease H (155 aa).

An RNase H type-1 domain is found at 4 to 145 (TEPTVYAYTD…ADRLANRGID (142 aa)). Asp13, Glu51, Asp73, and Asp137 together coordinate Mg(2+).

It belongs to the RNase H family. In terms of assembly, monomer. Mg(2+) is required as a cofactor.

The protein localises to the cytoplasm. The catalysed reaction is Endonucleolytic cleavage to 5'-phosphomonoester.. Functionally, endonuclease that specifically degrades the RNA of RNA-DNA hybrids. The chain is Ribonuclease H from Methylococcus capsulatus (strain ATCC 33009 / NCIMB 11132 / Bath).